Here is a 302-residue protein sequence, read N- to C-terminus: Succinate--CoA ligase [ADP-forming] subunit alpha (302 aa).

Residues Thr17 to Thr20, Lys43, and Ile96 to Glu98 each bind CoA. Tyr159 is a binding site for substrate. His247 acts as the Tele-phosphohistidine intermediate in catalysis.

Belongs to the succinate/malate CoA ligase alpha subunit family. As to quaternary structure, heterotetramer of two alpha and two beta subunits.

The enzyme catalyses succinate + ATP + CoA = succinyl-CoA + ADP + phosphate. It catalyses the reaction GTP + succinate + CoA = succinyl-CoA + GDP + phosphate. Its pathway is carbohydrate metabolism; tricarboxylic acid cycle; succinate from succinyl-CoA (ligase route): step 1/1. Functionally, succinyl-CoA synthetase functions in the citric acid cycle (TCA), coupling the hydrolysis of succinyl-CoA to the synthesis of either ATP or GTP and thus represents the only step of substrate-level phosphorylation in the TCA. The alpha subunit of the enzyme binds the substrates coenzyme A and phosphate, while succinate binding and nucleotide specificity is provided by the beta subunit. The polypeptide is Succinate--CoA ligase [ADP-forming] subunit alpha (Staphylococcus epidermidis (strain ATCC 35984 / DSM 28319 / BCRC 17069 / CCUG 31568 / BM 3577 / RP62A)).